The chain runs to 365 residues: Zinc finger protein lsy-2 (365 aa).

The segment at 1-36 is disordered; it reads MLTRRNAKQSQRNSADQSLSEFNSSSMTHGSNQSVY. Over residues 8 to 36 the composition is skewed to polar residues; it reads KQSQRNSADQSLSEFNSSSMTHGSNQSVY. 5 consecutive C2H2-type zinc fingers follow at residues 78–100, 106–128, 134–156, 264–287, and 296–318; these read HQCNVCNKIFVSYKGLQQHAVIH, FRCDICSKSFRFKSNLFEHRSVH, HACPYCGKTCRLKGNLKKHLRTH, HDCPVCKSQFMTRMDCVSHHTLEH, and FFCEKCYRPFADEASYNQHMSYH.

Its subcellular location is the nucleus speckle. Involved in transcriptional regulation. Required to specify left-right asymmetry of the ASE gustatory neurons, probably acting upstream of microRNA lsy-6. Involved in maintaining the distinction between somatic and germ cells, perhaps acting by repressing germ cell-specific genes in somatic cells. The sequence is that of Zinc finger protein lsy-2 from Caenorhabditis elegans.